Reading from the N-terminus, the 597-residue chain is Aspartate--tRNA(Asp/Asn) ligase (597 aa).

E175 is an L-aspartate binding site. Positions 199 to 202 are aspartate; it reads QQYK. The L-aspartate site is built by R221 and H456. Position 221–223 (221–223) interacts with ATP; the sequence is RDE. E490 is a binding site for ATP. Residue R497 participates in L-aspartate binding. Position 542 to 545 (542 to 545) interacts with ATP; sequence GVDR.

Belongs to the class-II aminoacyl-tRNA synthetase family. Type 1 subfamily. As to quaternary structure, homodimer.

The protein localises to the cytoplasm. It catalyses the reaction tRNA(Asx) + L-aspartate + ATP = L-aspartyl-tRNA(Asx) + AMP + diphosphate. Its function is as follows. Aspartyl-tRNA synthetase with relaxed tRNA specificity since it is able to aspartylate not only its cognate tRNA(Asp) but also tRNA(Asn). Reaction proceeds in two steps: L-aspartate is first activated by ATP to form Asp-AMP and then transferred to the acceptor end of tRNA(Asp/Asn). The protein is Aspartate--tRNA(Asp/Asn) ligase of Beijerinckia indica subsp. indica (strain ATCC 9039 / DSM 1715 / NCIMB 8712).